Here is a 574-residue protein sequence, read N- to C-terminus: 2-succinyl-5-enolpyruvyl-6-hydroxy-3-cyclohexene-1-carboxylate synthase (574 aa).

The protein belongs to the TPP enzyme family. MenD subfamily. In terms of assembly, homodimer. Mg(2+) serves as cofactor. Mn(2+) is required as a cofactor. Requires thiamine diphosphate as cofactor.

The catalysed reaction is isochorismate + 2-oxoglutarate + H(+) = 5-enolpyruvoyl-6-hydroxy-2-succinyl-cyclohex-3-ene-1-carboxylate + CO2. It functions in the pathway quinol/quinone metabolism; 1,4-dihydroxy-2-naphthoate biosynthesis; 1,4-dihydroxy-2-naphthoate from chorismate: step 2/7. It participates in quinol/quinone metabolism; menaquinone biosynthesis. Its function is as follows. Catalyzes the thiamine diphosphate-dependent decarboxylation of 2-oxoglutarate and the subsequent addition of the resulting succinic semialdehyde-thiamine pyrophosphate anion to isochorismate to yield 2-succinyl-5-enolpyruvyl-6-hydroxy-3-cyclohexene-1-carboxylate (SEPHCHC). The protein is 2-succinyl-5-enolpyruvyl-6-hydroxy-3-cyclohexene-1-carboxylate synthase of Vibrio atlanticus (strain LGP32) (Vibrio splendidus (strain Mel32)).